The chain runs to 633 residues: MWNMGLLFLIYYCVSIYSAKGDTKDGQVLPLDVGALAEDAGDAEANGEDTPERNSESSVLDTTLAFEPQASTQSTPIHGAVPTWRPKRDNCTPPAIEQFPQPLMNKWARQHGGLILHILVAVFTFFGLAIVCDEYFVASLDRLCEELKLSPDVAGATFMAAGSSAPELATVVIGVFFAKDDIGISGVIGSAVFNIMFVISVCALCSGTVCQLNWWPLVRDCFFYCVSILVMLIIIFNDVISCFESVVMLLCYVGYCVALHFNTELERWALGLNLPFKLPSKEEQSALVTYKNVPEGSYTQESVGQTQGQKATDDSETRSAKPQSDYQDYSDPNPTWDPNAAWGDESQPNPVANPPPVDDWGMGHSGQENMGYHADQPESVVTGDGPPAAVKSGGQVVSTQATSAGGNDYYKSTDKQREPRRDPLLRPMEGGLPALVSWYVVYPIHFLCKKTMPDCRQEQYRNWYPFTFLMSMVWISFYSYFMVWMITVIGSTLAIPDTVMGLTFVAAGVSVPDALSSIAVIKEGFGDMAVSNAIGSNVFDILVCLGLPWFIQTAIIKPGSHVNVISKGLAYSTLSLFSTVVFLILSTHLNGWKLDKRLGIILMVWYLFFITLASLYELNVFGYMNPPECPSTY.

An N-terminal signal peptide occupies residues 1–21 (MWNMGLLFLIYYCVSIYSAKG). The Extracellular segment spans residues 22–111 (DTKDGQVLPL…PLMNKWARQH (90 aa)). A helical membrane pass occupies residues 112–132 (GGLILHILVAVFTFFGLAIVC). The Cytoplasmic segment spans residues 133–157 (DEYFVASLDRLCEELKLSPDVAGAT). Residues 153–193 (VAGATFMAAGSSAPELATVVIGVFFAKDDIGISGVIGSAVF) form an Alpha-1 repeat. A helical transmembrane segment spans residues 158–178 (FMAAGSSAPELATVVIGVFFA). Residues 179–181 (KDD) lie on the Extracellular side of the membrane. Residues 182–202 (IGISGVIGSAVFNIMFVISVC) traverse the membrane as a helical segment. At 203 to 220 (ALCSGTVCQLNWWPLVRD) the chain is on the cytoplasmic side. Transmembrane regions (helical) follow at residues 221-241 (CFFY…DVIS) and 242-262 (CFES…LHFN). At 263–427 (TELERWALGL…EPRRDPLLRP (165 aa)) the chain is on the extracellular side. Composition is skewed to polar residues over residues 298-310 (YTQE…QGQK), 320-333 (AKPQ…SDPN), and 395-405 (QVVSTQATSAG). The interval 298-422 (YTQESVGQTQ…TDKQREPRRD (125 aa)) is disordered. Over residues 411–422 (KSTDKQREPRRD) the composition is skewed to basic and acidic residues. A helical transmembrane segment spans residues 428–448 (MEGGLPALVSWYVVYPIHFLC). Topologically, residues 449–468 (KKTMPDCRQEQYRNWYPFTF) are cytoplasmic. The chain crosses the membrane as a helical span at residues 469–489 (LMSMVWISFYSYFMVWMITVI). At 490 to 500 (GSTLAIPDTVM) the chain is on the extracellular side. The helical transmembrane segment at 501 to 521 (GLTFVAAGVSVPDALSSIAVI) threads the bilayer. An Alpha-2 repeat occupies 506 to 537 (AAGVSVPDALSSIAVIKEGFGDMAVSNAIGSN). Topologically, residues 522–535 (KEGFGDMAVSNAIG) are cytoplasmic. Residues 536-556 (SNVFDILVCLGLPWFIQTAII) form a helical membrane-spanning segment. Over 557–568 (KPGSHVNVISKG) the chain is Extracellular. A helical membrane pass occupies residues 569–589 (LAYSTLSLFSTVVFLILSTHL). Residues 590-597 (NGWKLDKR) are Cytoplasmic-facing. The chain crosses the membrane as a helical span at residues 598 to 618 (LGIILMVWYLFFITLASLYEL). Over 619 to 633 (NVFGYMNPPECPSTY) the chain is Extracellular.

Belongs to the Ca(2+):cation antiporter (CaCA) (TC 2.A.19) family. SLC24A subfamily.

The protein localises to the membrane. Functionally, may function in the removal and maintenance of calcium homeostasis. Transports one Ca(2+) and 1 K(+) in exchange for 4 Na(+). In Drosophila melanogaster (Fruit fly), this protein is Probable sodium/potassium/calcium exchanger CG1090.